The following is a 271-amino-acid chain: 3-methyl-2-oxobutanoate hydroxymethyltransferase (271 aa).

Positions 51 and 90 each coordinate Mg(2+). 3-methyl-2-oxobutanoate contacts are provided by residues 51 to 52, Asp90, and Lys119; that span reads DS. Glu121 lines the Mg(2+) pocket. Glu188 functions as the Proton acceptor in the catalytic mechanism.

The protein belongs to the PanB family. Homodecamer; pentamer of dimers. The cofactor is Mg(2+).

The protein localises to the cytoplasm. The enzyme catalyses 3-methyl-2-oxobutanoate + (6R)-5,10-methylene-5,6,7,8-tetrahydrofolate + H2O = 2-dehydropantoate + (6S)-5,6,7,8-tetrahydrofolate. It functions in the pathway cofactor biosynthesis; (R)-pantothenate biosynthesis; (R)-pantoate from 3-methyl-2-oxobutanoate: step 1/2. Catalyzes the reversible reaction in which hydroxymethyl group from 5,10-methylenetetrahydrofolate is transferred onto alpha-ketoisovalerate to form ketopantoate. This is 3-methyl-2-oxobutanoate hydroxymethyltransferase from Azoarcus sp. (strain BH72).